Reading from the N-terminus, the 118-residue chain is Large ribosomal subunit protein uL24 (118 aa).

This sequence belongs to the universal ribosomal protein uL24 family. In terms of assembly, part of the 50S ribosomal subunit.

Functionally, one of two assembly initiator proteins, it binds directly to the 5'-end of the 23S rRNA, where it nucleates assembly of the 50S subunit. In terms of biological role, one of the proteins that surrounds the polypeptide exit tunnel on the outside of the subunit. In Prochlorococcus marinus (strain AS9601), this protein is Large ribosomal subunit protein uL24.